The chain runs to 233 residues: Ion-translocating oxidoreductase complex subunit E (233 aa).

6 helical membrane-spanning segments follow: residues 18 to 38 (ALVQ…ATNA), 39 to 59 (LGLG…VSAL), 69 to 89 (IPIY…LINA), 92 to 112 (FGLY…CIVI), 128 to 148 (ALDG…LGAL), and 182 to 202 (PFLL…LLAG).

It belongs to the NqrDE/RnfAE family. The complex is composed of six subunits: RnfA, RnfB, RnfC, RnfD, RnfE and RnfG.

It is found in the cell inner membrane. Part of a membrane-bound complex that couples electron transfer with translocation of ions across the membrane. The protein is Ion-translocating oxidoreductase complex subunit E of Yersinia pseudotuberculosis serotype O:1b (strain IP 31758).